A 570-amino-acid chain; its full sequence is MGLLWYLMSLSFYGILQSHASERCDDWGLDTMRQIQVFEDEPARIKCPLFEHFLKYNYSTAHSSGLTLIWYWTRQDRDLEEPINFRLPENRISKEKDVLWFRPTLLNDTGNYTCMLRNTTYCSKVAFPLEVVQKDSCFNSAMRFPVHKMYIEHGIHKITCPNVDGYFPSSVKPSVTWYKGCTEIVDFHNVLPEGMNLSFFIPLVSNNGNYTCVVTYPENGRLFHLTRTVTVKVVGSPKDALPPQIYSPNDRVVYEKEPGEELVIPCKVYFSFIMDSHNEVWWTIDGKKPDDVTVDITINESVSYSSTEDETRTQILSIKKVTPEDLRRNYVCHARNTKGEAEQAAKVKQKVIPPRYTVELACGFGATVFLVVVLIVVYHVYWLEMVLFYRAHFGTDETILDGKEYDIYVSYARNVEEEEFVLLTLRGVLENEFGYKLCIFDRDSLPGGIVTDETLSFIQKSRRLLVVLSPNYVLQGTQALLELKAGLENMASRGNINVILVQYKAVKDMKVKELKRAKTVLTVIKWKGEKSKYPQGRFWKQLQVAMPVKKSPRWSSNDKQGLSYSSLKNV.

Positions 1–20 are cleaved as a signal peptide; sequence MGLLWYLMSLSFYGILQSHA. Ig-like C2-type domains follow at residues 21–128, 139–230, and 243–348; these read SERC…VAFP, NSAM…RTVT, and PQIY…AKVK. The Extracellular portion of the chain corresponds to 21 to 367; sequence SERCDDWGLD…VELACGFGAT (347 aa). Cystine bridges form between cysteine 24-cysteine 122, cysteine 47-cysteine 114, cysteine 137-cysteine 181, cysteine 160-cysteine 212, and cysteine 266-cysteine 332. N-linked (GlcNAc...) asparagine glycosylation occurs at asparagine 57. The tract at residues 69 to 85 is essential for interaction with PTPRD; the sequence is IWYWTRQDRDLEEPINF. Asparagine 107, asparagine 111, and asparagine 118 each carry an N-linked (GlcNAc...) asparagine glycan. Residues asparagine 196, asparagine 209, and asparagine 299 are each glycosylated (N-linked (GlcNAc...) asparagine). The helical transmembrane segment at 368–388 threads the bilayer; that stretch reads VFLVVVLIVVYHVYWLEMVLF. Residues 389–570 are Cytoplasmic-facing; sequence YRAHFGTDET…GLSYSSLKNV (182 aa). The TIR domain maps to 403 to 546; sequence KEYDIYVSYA…RFWKQLQVAM (144 aa). Glutamate 482 is an active-site residue. Residues 550 to 570 form a disordered region; sequence KSPRWSSNDKQGLSYSSLKNV. Residues 553-570 show a composition bias toward polar residues; that stretch reads RWSSNDKQGLSYSSLKNV.

It belongs to the interleukin-1 receptor family. As to quaternary structure, the interleukin-36 receptor complex is a heterodimer of IL1RL2 and IL1RAP; the association is inhibited by IL36RN. The interleukin-1 receptor complex is a heterodimer of IL1R1 and IL1RAP. Associates with IL1R2 to form a non-signaling interleukin-1 receptor complex. Interacts with IL-33-bound IL1RL1 to form the minimal interleukin-33 signaling complex with a 1:1:1 stoichiometry. Interacts with KIT (independently of stimulation with KITLG/SCF). A mast cell-specific KITLG/SCF-induced interleukin-33 signaling complex contains IL1RL1, IL1RAP, KIT and MYD88. Interacts (via the first immunoglobilin domain) with PTPRD (via the third immunoglobilin domain); induces pre- and postsynaptic differentiation of neurons. Detected in lung, brain, spleen, thymus and liver. Expressed in brain endothelial cells, astrocytes, microglia and neurons. Isoform 3 is predominantly expressed in brain; expressed in hippocampal neurons.

The protein localises to the cell membrane. The protein resides in the secreted. It carries out the reaction NAD(+) + H2O = ADP-D-ribose + nicotinamide + H(+). Its function is as follows. Coreceptor for IL1RL2 in the IL-36 signaling system. Coreceptor with IL1R1 in the IL-1 signaling system. Associates with IL1R1 bound to IL1B to form the high affinity interleukin-1 receptor complex which mediates interleukin-1-dependent activation of NF-kappa-B and other pathways. Signaling involves the recruitment of adapter molecules such as TOLLIP, MYD88, and IRAK1 or IRAK2 via the respective TIR domains of the receptor/coreceptor subunits. Recruits TOLLIP to the signaling complex. Does not bind to interleukin-1 alone; binding of IL1RN to IL1R1, prevents its association with IL1R1 to form a signaling complex. The cellular response is modulated through a non-signaling association with the membrane IL1R2 decoy receptor. Secreted forms (isoforms 2 and 3) associate with secreted ligand-bound IL1R2 and increase the affinity of secreted IL1R2 for IL1B; this complex formation may be the dominant mechanism for neutralization of IL1B by secreted/soluble receptors. Coreceptor for IL1RL1 in the IL-33 signaling system. Can bidirectionally induce pre- and postsynaptic differentiation of neurons by trans-synaptically binding to PTPRD. May play a role in IL1B-mediated costimulation of IFNG production from T-helper 1 (Th1) cells. Functionally, associates with secreted ligand-bound IL1R2 and increases the affinity of secreted IL1R2 for IL1B; this complex formation may be the dominant mechanism for neutralization of IL1B by secreted/soluble receptors. Enhances the ability of secreted IL1R1 to inhibit IL-33 signaling. In terms of biological role, required for Src phosphorylation by IL1B. Required for IL1B-potentiated NMDA-induced calcium influx in neurons acting in cooperation with IL1R1 isoform 2 to mediate Akt kinase activation. The sequence is that of Interleukin-1 receptor accessory protein (Il1rap) from Mus musculus (Mouse).